We begin with the raw amino-acid sequence, 358 residues long: Acyl-CoA Delta-12 desaturase (358 aa).

Transmembrane regions (helical) follow at residues 30–50 (IILYIIMHLTGFYGLYLAMFY) and 55–75 (TVFYSWFLLVIALQGVTAGSH). Residues His-75, His-80, His-112, His-115, and His-116 each contribute to the Fe cation site. Positions 75–80 (HRLWAH) match the Histidine box-1 motif. The Histidine box-2 motif lies at 112-116 (HRVHH). Helical transmembrane passes span 175–195 (TFFAPVIGFYLPAAIPWYFWG) and 200–220 (TAFFVATMLRYCACTNITFLV). 4 residues coordinate Fe cation: His-225, His-254, His-257, and His-258. The Histidine box-3 motif lies at 254 to 258 (HNYHH).

This sequence belongs to the fatty acid desaturase type 1 family. Requires Fe(2+) as cofactor.

Its subcellular location is the membrane. The catalysed reaction is (9Z)-octadecenoyl-CoA + 2 Fe(II)-[cytochrome b5] + O2 + 2 H(+) = (9Z,12Z)-octadecadienoyl-CoA + 2 Fe(III)-[cytochrome b5] + 2 H2O. It carries out the reaction (9Z)-hexadecenoyl-CoA + 2 Fe(II)-[cytochrome b5] + O2 + 2 H(+) = (9Z,12Z)-hexadecadienoyl-CoA + 2 Fe(III)-[cytochrome b5] + 2 H2O. Catalyzes the formation of a Delta12 double bond, acting on monounsaturated fatty acyl substrates like palmitoleoyl-CoA ((9Z)-hexadecenoyl-CoA) and oleoyl-CoA ((9Z)-octadecenoyl-CoA) with higher desaturation activity on (9Z)-octadecenoyl-CoA than (9Z)-hexadecenoyl-CoA. Requires preexisting cis double bond at the Delta9 position of fatty acyls to be able to insert the Delta12 double bond. Delta12-desaturation of (9Z)-octadecenoyl-CoA in insects produces (9Z,12Z)-octadecadienoyl-CoA (linoleoyl-CoA) which may be used to supply precursors of crucial mediators of immunity and reproduction and other essential functions. In Tribolium castaneum (Red flour beetle), this protein is Acyl-CoA Delta-12 desaturase.